A 248-amino-acid chain; its full sequence is Serine/arginine-rich splicing factor 1 (248 aa).

An N-acetylserine modification is found at Ser-2. Ser-2 is subject to Phosphoserine. Positions 16 to 91 (CRIYVGNLPP…YRLRVEFPRS (76 aa)) constitute an RRM 1 domain. Residue Lys-30 forms a Glycyl lysine isopeptide (Lys-Gly) (interchain with G-Cter in SUMO2) linkage. Lys-38 bears the N6-acetyllysine; alternate mark. Lys-38 is covalently cross-linked (Glycyl lysine isopeptide (Lys-Gly) (interchain with G-Cter in SUMO2); alternate). Residues 88-134 (FPRSGRGTGRGGGGGGGGGAPRGRYGPPSRRSENRVVVSGLPPSGSW) are disordered. Arg-93, Arg-97, and Arg-109 each carry asymmetric dimethylarginine; alternate. Arg-93, Arg-97, and Arg-109 each carry omega-N-methylarginine; alternate. Positions 93-108 (RGTGRGGGGGGGGGAP) are enriched in gly residues. Residue Arg-111 is modified to Omega-N-methylarginine. In terms of domain architecture, RRM 2 spans 121–195 (NRVVVSGLPP…ETAYIRVKVD (75 aa)). Residue Ser-133 is modified to Phosphoserine. Lys-179 carries the post-translational modification N6-acetyllysine. Positions 191-248 (RVKVDGPRSPSYGRSRSRSRSRSRSRSRSNSRSRSYSPRRSRGSPRYSPRHSRSRSRT) are disordered. The tract at residues 198–247 (RSPSYGRSRSRSRSRSRSRSRSNSRSRSYSPRRSRGSPRYSPRHSRSRSR) is interaction with SAFB1. Phosphoserine occurs at positions 199 and 201. Tyr-202 is modified (phosphotyrosine). Residues Ser-205, Ser-207, Ser-209, Ser-231, Ser-234, and Ser-238 each carry the phosphoserine modification. The span at 205 to 248 (SRSRSRSRSRSRSRSNSRSRSYSPRRSRGSPRYSPRHSRSRSRT) shows a compositional bias: basic residues.

It belongs to the splicing factor SR family. As to quaternary structure, consists of two polypeptides of p32 and p33. Identified in the spliceosome C complex. Component of a ribonucleoprotein complex containing mRNAs and RNA-binding proteins including DDX5, HNRNPH2 and SRSF1 as well as splicing regulator ARVCF. In vitro, self-associates and binds SRSF2, SNRNP70 and U2AF1 but not U2AF2. Binds SREK1/SFRS12. Interacts with SAFB/SAFB1. Interacts with PSIP1/LEDGF. Interacts with RSRC1 (via Arg/Ser-rich domain). Interacts with ZRSR2/U2AF1-RS2. Interacts with CCDC55 (via C-terminus). Interacts with SRPK1 and a sliding docking interaction is essential for its sequential and processive phosphorylation by SRPK1. Interacts with NXF1. Interacts with CCNL1, CCNL2 and CDK11B. Interacts with RRP1B. Interacts (when phosphorylated in its RS domain) with TNPO3; promoting nuclear import. Interacts with ILDR1 (via C-terminus) and ILDR2. Post-translationally, phosphorylated by CLK1, CLK2, CLK3 and CLK4. Phosphorylated by SRPK1 at multiple serines in its RS domain via a directional (C-terminal to N-terminal) and a dual-track mechanism incorporating both processive phosphorylation (in which the kinase stays attached to the substrate after each round of phosphorylation) and distributive phosphorylation steps (in which the kinase and substrate dissociate after each phosphorylation event). The RS domain of SRSF1 binds to a docking groove in the large lobe of the kinase domain of SRPK1 and this induces certain structural changes in SRPK1 and/or RRM 2 domain of SRSF1, allowing RRM 2 to bind the kinase and initiate phosphorylation. The cycles continue for several phosphorylation steps in a processive manner (steps 1-8) until the last few phosphorylation steps (approximately steps 9-12). During that time, a mechanical stress induces the unfolding of the beta-4 motif in RRM 2, which then docks at the docking groove of SRPK1. This also signals RRM 2 to begin to dissociate, which facilitates SRSF1 dissociation after phosphorylation is completed. In terms of processing, asymmetrically dimethylated at arginines, probably by PRMT1, methylation promotes localization to nuclear speckles.

The protein resides in the cytoplasm. The protein localises to the nucleus speckle. Functionally, plays a role in preventing exon skipping, ensuring the accuracy of splicing and regulating alternative splicing. Interacts with other spliceosomal components, via the RS domains, to form a bridge between the 5'- and 3'-splice site binding components, U1 snRNP and U2AF. Can stimulate binding of U1 snRNP to a 5'-splice site-containing pre-mRNA. Binds to purine-rich RNA sequences, either the octamer, 5'-RGAAGAAC-3' (r=A or G) or the decamers, AGGACAGAGC/AGGACGAAGC. Binds preferentially to the 5'-CGAGGCG-3' motif in vitro. Three copies of the octamer constitute a powerful splicing enhancer in vitro, the ASF/SF2 splicing enhancer (ASE) which can specifically activate ASE-dependent splicing. May function as export adapter involved in mRNA nuclear export through the TAP/NXF1 pathway. This Bos taurus (Bovine) protein is Serine/arginine-rich splicing factor 1 (SRSF1).